Reading from the N-terminus, the 548-residue chain is Chaperonin GroEL (548 aa).

ATP-binding positions include 30-33 (TLGP), Lys51, 87-91 (DGTTT), Gly415, and Asp495.

It belongs to the chaperonin (HSP60) family. Forms a cylinder of 14 subunits composed of two heptameric rings stacked back-to-back. Interacts with the co-chaperonin GroES.

The protein resides in the cytoplasm. It carries out the reaction ATP + H2O + a folded polypeptide = ADP + phosphate + an unfolded polypeptide.. Its function is as follows. Together with its co-chaperonin GroES, plays an essential role in assisting protein folding. The GroEL-GroES system forms a nano-cage that allows encapsulation of the non-native substrate proteins and provides a physical environment optimized to promote and accelerate protein folding. This chain is Chaperonin GroEL, found in Colwellia psychrerythraea (strain 34H / ATCC BAA-681) (Vibrio psychroerythus).